The chain runs to 189 residues: UPF0149 protein VFMJ11_2207 (189 aa).

It belongs to the UPF0149 family.

The protein is UPF0149 protein VFMJ11_2207 of Aliivibrio fischeri (strain MJ11) (Vibrio fischeri).